The chain runs to 1132 residues: DNA-directed RNA polymerase subunit beta (1132 aa).

The protein belongs to the RNA polymerase beta chain family. The RNAP catalytic core consists of 2 alpha, 1 beta, 1 beta' and 1 omega subunit. When a sigma factor is associated with the core the holoenzyme is formed, which can initiate transcription.

It catalyses the reaction RNA(n) + a ribonucleoside 5'-triphosphate = RNA(n+1) + diphosphate. Functionally, DNA-dependent RNA polymerase catalyzes the transcription of DNA into RNA using the four ribonucleoside triphosphates as substrates. The polypeptide is DNA-directed RNA polymerase subunit beta (Carboxydothermus hydrogenoformans (strain ATCC BAA-161 / DSM 6008 / Z-2901)).